Reading from the N-terminus, the 251-residue chain is uncharacterized protein (251 aa).

The next 7 helical transmembrane spans lie at 48–68 (WMVG…VELI), 88–108 (VLWG…LVAN), 110–130 (IPLL…FIWV), 132–152 (AMVW…GSSF), 158–178 (IGVS…GLFV), 184–204 (IIGC…MPVL), and 209–229 (GVSW…AYLL).

This sequence to M.tuberculosis Rv1337.

It localises to the cell membrane. This is an uncharacterized protein from Mycobacterium leprae (strain TN).